We begin with the raw amino-acid sequence, 272 residues long: HMP-PP phosphatase (272 aa).

D8 (nucleophile) is an active-site residue. Mg(2+) contacts are provided by D8, D10, and D212.

It belongs to the HAD-like hydrolase superfamily. Cof family. Requires Mg(2+) as cofactor.

The catalysed reaction is 4-amino-2-methyl-5-(diphosphooxymethyl)pyrimidine + H2O = 4-amino-2-methyl-5-(phosphooxymethyl)pyrimidine + phosphate + H(+). Functionally, catalyzes the hydrolysis of 4-amino-2-methyl-5-hydroxymethylpyrimidine pyrophosphate (HMP-PP) to 4-amino-2-methyl-5-hydroxymethylpyrimidine phosphate (HMP-P). In Escherichia coli O157:H7, this protein is HMP-PP phosphatase.